A 487-amino-acid polypeptide reads, in one-letter code: Aspartyl/glutamyl-tRNA(Asn/Gln) amidotransferase subunit B (487 aa).

It belongs to the GatB/GatE family. GatB subfamily. In terms of assembly, heterotrimer of A, B and C subunits.

It catalyses the reaction L-glutamyl-tRNA(Gln) + L-glutamine + ATP + H2O = L-glutaminyl-tRNA(Gln) + L-glutamate + ADP + phosphate + H(+). It carries out the reaction L-aspartyl-tRNA(Asn) + L-glutamine + ATP + H2O = L-asparaginyl-tRNA(Asn) + L-glutamate + ADP + phosphate + 2 H(+). In terms of biological role, allows the formation of correctly charged Asn-tRNA(Asn) or Gln-tRNA(Gln) through the transamidation of misacylated Asp-tRNA(Asn) or Glu-tRNA(Gln) in organisms which lack either or both of asparaginyl-tRNA or glutaminyl-tRNA synthetases. The reaction takes place in the presence of glutamine and ATP through an activated phospho-Asp-tRNA(Asn) or phospho-Glu-tRNA(Gln). The protein is Aspartyl/glutamyl-tRNA(Asn/Gln) amidotransferase subunit B of Chlamydia caviae (strain ATCC VR-813 / DSM 19441 / 03DC25 / GPIC) (Chlamydophila caviae).